The primary structure comprises 164 residues: MSQSICSTGLRWLWLVVVVLIIDLGSKYLILQNFALGDTVPLFPSLNLHYARNYGAAFSFLADSGGWQRWFFAGIAIGISVTLVVMMYRSKATQKLNNIAYALIIGGALGNLFDRLWHGFVVDMIDFYVGDWHFATFNLADTAICVGAALIVLEGFLPSKAKKQ.

3 helical membrane passes run 12 to 32 (WLWL…LILQ), 70 to 90 (WFFA…MYRS), and 102 to 122 (ALII…GFVV). Residues D123 and D141 contribute to the active site. A helical membrane pass occupies residues 137-157 (FNLADTAICVGAALIVLEGFL).

Belongs to the peptidase A8 family.

It is found in the cell inner membrane. It catalyses the reaction Release of signal peptides from bacterial membrane prolipoproteins. Hydrolyzes -Xaa-Yaa-Zaa-|-(S,diacylglyceryl)Cys-, in which Xaa is hydrophobic (preferably Leu), and Yaa (Ala or Ser) and Zaa (Gly or Ala) have small, neutral side chains.. It functions in the pathway protein modification; lipoprotein biosynthesis (signal peptide cleavage). This protein specifically catalyzes the removal of signal peptides from prolipoproteins. The protein is Lipoprotein signal peptidase of Escherichia coli O157:H7.